Here is a 771-residue protein sequence, read N- to C-terminus: Chaperone protein dnaK3 (771 aa).

Thr198 is modified (phosphothreonine; by autocatalysis). The segment at 624 to 771 (FDDDDDYYNR…GWDDDDDDWF (148 aa)) is disordered. 2 stretches are compositionally biased toward basic and acidic residues: residues 630–652 (YYNRRPAPRDDYRGGNDYGRYDD) and 708–734 (YDDRRSSPQDDYSRGDRQKDYDYRENA).

It belongs to the heat shock protein 70 family.

Acts as a chaperone. The sequence is that of Chaperone protein dnaK3 (dnaK3) from Synechocystis sp. (strain ATCC 27184 / PCC 6803 / Kazusa).